The primary structure comprises 855 residues: Valine--tRNA ligase (855 aa).

The 'HIGH' region signature appears at 44-54; that stretch reads PYPTGNFHIGN. The 'KMSKS' region signature appears at 522–526; the sequence is KMSKS. K525 contacts ATP.

It belongs to the class-I aminoacyl-tRNA synthetase family. ValS type 2 subfamily.

It is found in the cytoplasm. The enzyme catalyses tRNA(Val) + L-valine + ATP = L-valyl-tRNA(Val) + AMP + diphosphate. In terms of biological role, catalyzes the attachment of valine to tRNA(Val). As ValRS can inadvertently accommodate and process structurally similar amino acids such as threonine, to avoid such errors, it has a 'posttransfer' editing activity that hydrolyzes mischarged Thr-tRNA(Val) in a tRNA-dependent manner. The chain is Valine--tRNA ligase from Methanothrix thermoacetophila (strain DSM 6194 / JCM 14653 / NBRC 101360 / PT) (Methanosaeta thermophila).